Consider the following 1283-residue polypeptide: Oxysterol-binding protein homolog 2 (1283 aa).

S2 carries the N-acetylserine modification. At S7 the chain carries Phosphoserine. ANK repeat units follow at residues 106–134 and 206–235; these read NGNT…SIND and TGTT…EATV. Positions 289–386 constitute a PH domain; the sequence is PPTYKGFLKK…WVNAIQSAIR (98 aa). Phosphoserine is present on residues S422, S445, S451, S455, S458, S459, and S486. T488 is subject to Phosphothreonine. Polar residues-rich tracts occupy residues 504–518 and 530–551; these read SNTL…SGSG and ANLS…NNYI. Disordered regions lie at residues 504–571 and 702–721; these read SNTL…LGIN and TAGN…DTTA. Residues S512 and S515 each carry the phosphoserine modification. Over residues 554 to 568 the composition is skewed to acidic residues; the sequence is FEGDEANSDDEEEDL. The span at 707–716 shows a compositional bias: basic and acidic residues; sequence ESLENDKEQE. The residue at position 717 (S717) is a Phosphoserine. The short motif at 745–751 is the FFAT element; sequence EFYDAAE. The interval 767–834 is disordered; sequence STAAAPKHAP…SLKNFKAEDK (68 aa). A Phosphothreonine modification is found at T783. S787 bears the Phosphoserine mark. Composition is skewed to basic and acidic residues over residues 791 to 810 and 818 to 834; these read QDEK…KFEK and DEPK…AEDK. S825 and S1151 each carry phosphoserine. Residues 897–1268 are OSBP-related domain (ORD); sequence SLWAVLKSMV…KYWRYTGKYW (372 aa).

It belongs to the OSBP family. Interacts with SCS2.

It localises to the cell membrane. The protein localises to the endoplasmic reticulum membrane. Lipid transport protein (LTP) involved in non-vesicular transfer of lipids between membranes. Functions in phosphoinositide-coupled directional transport of various lipids by carrying the lipid molecule in a hydrophobic pocket and transferring it between membranes through the cytosol. Involved in maintenance of intracellular sterol distribution and homeostasis. Binds and transports sterol. Plays a role in the positive regulation of vesicular transport of ceramide from the ER to the Golgi, negatively regulating COPII-mediated ER export of cargos. This chain is Oxysterol-binding protein homolog 2, found in Saccharomyces cerevisiae (strain ATCC 204508 / S288c) (Baker's yeast).